The following is a 106-amino-acid chain: Vacuolar ATPase assembly integral membrane protein VMA21 homolog (106 aa).

The tract at residues 1–26 (MSNKNKKSGGAGNGAAQKQTRQQSHD) is disordered. Residues 1–32 (MSNKNKKSGGAGNGAAQKQTRQQSHDSQDYSS) are Cytoplasmic-facing. The helical transmembrane segment at 33 to 53 (FKIVLFYCMLIVFLPVVTFFL) threads the bilayer. The Lumenal portion of the chain corresponds to 54–69 (LKGFVLDRFFSLSEVK). The helical transmembrane segment at 70-90 (VNIASAVGAVVSLHIALGLYI) threads the bilayer. Residues 91–106 (YRAYFGATGSKAVKED) are Cytoplasmic-facing.

It belongs to the VMA21 family.

The protein resides in the endoplasmic reticulum membrane. It is found in the endoplasmic reticulum-Golgi intermediate compartment membrane. Its subcellular location is the cytoplasmic vesicle. The protein localises to the COPII-coated vesicle membrane. Functionally, required for the assembly of the V0 complex of the vacuolar ATPase (V-ATPase) in the endoplasmic reticulum. This is Vacuolar ATPase assembly integral membrane protein VMA21 homolog from Drosophila ananassae (Fruit fly).